We begin with the raw amino-acid sequence, 370 residues long: 4-hydroxy-3-methylbut-2-en-1-yl diphosphate synthase (flavodoxin) (370 aa).

Positions 271, 274, 306, and 313 each coordinate [4Fe-4S] cluster.

It belongs to the IspG family. Requires [4Fe-4S] cluster as cofactor.

The enzyme catalyses (2E)-4-hydroxy-3-methylbut-2-enyl diphosphate + oxidized [flavodoxin] + H2O + 2 H(+) = 2-C-methyl-D-erythritol 2,4-cyclic diphosphate + reduced [flavodoxin]. It participates in isoprenoid biosynthesis; isopentenyl diphosphate biosynthesis via DXP pathway; isopentenyl diphosphate from 1-deoxy-D-xylulose 5-phosphate: step 5/6. Its function is as follows. Converts 2C-methyl-D-erythritol 2,4-cyclodiphosphate (ME-2,4cPP) into 1-hydroxy-2-methyl-2-(E)-butenyl 4-diphosphate. This chain is 4-hydroxy-3-methylbut-2-en-1-yl diphosphate synthase (flavodoxin), found in Actinobacillus pleuropneumoniae serotype 5b (strain L20).